A 114-amino-acid chain; its full sequence is Nucleoid-associated protein MAE_23910 (114 aa).

The protein belongs to the YbaB/EbfC family. As to quaternary structure, homodimer.

It is found in the cytoplasm. The protein resides in the nucleoid. Its function is as follows. Binds to DNA and alters its conformation. May be involved in regulation of gene expression, nucleoid organization and DNA protection. The protein is Nucleoid-associated protein MAE_23910 of Microcystis aeruginosa (strain NIES-843 / IAM M-2473).